The chain runs to 613 residues: MEAVIKAVLTGYPGETSKKDSKKKPPATSKKDPEKTPLLPTRVNYILIIGVLVLCEVTGVRADVHLLEQPGNLWITWASRTGQTDFCLSTQSATSPFQTCLIGIPSPISEGDFKGYVSDNCTTLEPHRLVSRGIPGGPENSTTLTYQKVSCLLLKLNVSLLDEPSELQLLGSQSLPNITNITRIPSVAGGCIGFTPYDSPAGVYGWDRREVTHILLTDPGNNPFFDKASNSSKPFTVVTADRHNLFMGSEYCGAYGYRFWEMYNCSQMRQNWSICQDVWGRGPPENWCTSTGGTWVNQSKEFNETEPFSFTVNCTGSNLGNVSGCCGEPITILPPEAWVDSTQGSFTKPKALPPAIFLICGDRAWQGIPSRPVGGPCYLGKLTMLAPNHTDILKILANSSRTGIRRKRSVSHLDDTCSDEVQLWGPTARIFASILAPGVAAAQALKEIERLACWSVKQANLTTSLLGDLLDDVTSIRHAVLQNRAAIDFLLLAHGHGCEDVAGMCCFNLSDHSESIQKKFQLMKEHVNKIGVDSDPIGSWLRGLFGGIGEWAVHLLKGLLLGLVVILLLVVCLPCLLQIVCGNIRKMINNSISYHTEYKKLQKAYGQPESRIV.

The first 62 residues, 1-62, serve as a signal peptide directing secretion; that stretch reads MEAVIKAVLT…VLCEVTGVRA (62 aa). The tract at residues 14–36 is disordered; that stretch reads GETSKKDSKKKPPATSKKDPEKT. Residues 63–559 lie on the Extracellular side of the membrane; that stretch reads DVHLLEQPGN…EWAVHLLKGL (497 aa). 7 disulfide bridges follow: Cys-87-Cys-506, Cys-121-Cys-151, Cys-191-Cys-252, Cys-265-Cys-275, Cys-360-Cys-377, Cys-417-Cys-453, and Cys-498-Cys-505. N-linked (GlcNAc...) asparagine; by host glycans are attached at residues Asn-120, Asn-140, Asn-157, Asn-177, Asn-230, Asn-264, Asn-271, Asn-297, Asn-303, Asn-313, and Asn-321. Residues 184–233 form a binding to host receptor region; that stretch reads IPSVAGGCIGFTPYDSPAGVYGWDRREVTHILLTDPGNNPFFDKASNSSK. The interval 268–294 is binding to host receptor; that stretch reads MRQNWSICQDVWGRGPPENWCTSTGGT. N-linked (GlcNAc...) asparagine; by host glycans are attached at residues Asn-388 and Asn-398. Residues 425 to 445 are fusion peptide; sequence GPTARIFASILAPGVAAAQAL. N-linked (GlcNAc...) asparagine; by host glycosylation occurs at Asn-460. An immunosuppression region spans residues 481–497; sequence LQNRAAIDFLLLAHGHG. Residue Asn-508 is glycosylated (N-linked (GlcNAc...) asparagine; by host). The chain crosses the membrane as a helical span at residues 560–580; that stretch reads LLGLVVILLLVVCLPCLLQIV. Residues Cys-572 and Cys-575 are each lipidated (S-palmitoyl cysteine; by host). The Extracellular segment spans residues 581-613; sequence CGNIRKMINNSISYHTEYKKLQKAYGQPESRIV. An N-linked (GlcNAc...) asparagine; by host glycan is attached at Asn-589.

It belongs to the Alpharetroviruses envelope glycoprotein family. Heterodimer with the transmembrane protein. The mature envelope protein (Env) consists of a trimer of SU-TM heterodimers attached by a labile interchain disulfide bond. Interacts with the host cell entry receptor TVB-S3; this interaction allows the viral attachment. In terms of assembly, heterodimer with the surface protein. The mature envelope protein (Env) consists of a trimer of SU-TM heterodimers attached by a labile interchain disulfide bond. Specific enzymatic cleavages in vivo yield mature proteins. Envelope glycoproteins are synthesized as an inactive precursor that is N-glycosylated and processed likely by host cell furin or by a furin-like protease in the Golgi to yield the mature SU and TM proteins. The cleavage site between SU and TM requires the minimal sequence [KR]-X-[KR]-R. Post-translationally, the transmembrane protein is palmitoylated. Palmitoylation is necessary for glycoprotein function and infectivity.

The protein localises to the virion membrane. The protein resides in the host cell membrane. Its function is as follows. The surface protein (SU) attaches the virus to the host cell entry receptor TVB-S3/CAR1. This interaction triggers the refolding of the transmembrane protein (TM) thereby unmasking its fusion peptide and the formation of a reactive thiolate on Cys-100 to activate its fusogenic potential. Fusion occurs at the host cell plasma membrane. Functionally, the transmembrane protein (TM) acts as a class I viral fusion protein. Under the current model, the protein has at least 3 conformational states: pre-fusion native state, pre-hairpin intermediate state, and post-fusion hairpin state. During viral and target cell membrane fusion, the coiled coil regions (heptad repeats) assume a trimer-of-hairpins structure, positioning the fusion peptide in close proximity to the C-terminal region of the ectodomain. The formation of this structure appears to drive apposition and subsequent fusion of viral and target cell membranes. Membranes fusion leads to delivery of the nucleocapsid into the cytoplasm. The polypeptide is Envelope glycoprotein gp95 (env) (Rous sarcoma virus subgroup B (strain Schmidt-Ruppin) (RSV-SR-B)).